We begin with the raw amino-acid sequence, 391 residues long: Zinc finger protein ubi-d4 (391 aa).

Ala2 is subject to N-acetylalanine. Glycyl lysine isopeptide (Lys-Gly) (interchain with G-Cter in SUMO2) cross-links involve residues Lys10, Lys99, Lys107, and Lys108. Disordered stretches follow at residues 79–147 (WRKK…GEFP) and 165–199 (DDLDDEDYEEDTPKRRGKGKSKSKGVSSARKKLDA). Composition is skewed to basic and acidic residues over residues 100–110 (PDTDQTLKKEG) and 126–140 (DPLEKRGAPDPRVDD). Ser142 is modified (phosphoserine). Over residues 165 to 174 (DDLDDEDYEE) the composition is skewed to acidic residues. Tyr172 carries the post-translational modification Phosphotyrosine. Residue Thr176 is modified to Phosphothreonine. Glycyl lysine isopeptide (Lys-Gly) (interchain with G-Cter in SUMO2) cross-links involve residues Lys178 and Lys196. A Phosphoserine modification is found at Ser200. A C2H2-type zinc finger spans residues 209 to 232 (YACDICGKRYKNRPGLSYHYAHSH). The segment at 233-266 (LAEEEGEDKEDSRPPTPVSQRSEEQKSKKGPDGL) is disordered. Ser244 bears the Phosphoserine mark. The segment covering 253-263 (RSEEQKSKKGP) has biased composition (basic and acidic residues). 2 PHD-type zinc fingers span residues 270-330 (NNYC…CKCC) and 327-377 (CKCC…CLDL). Ser280 carries the post-translational modification Phosphoserine. Lys281 is covalently cross-linked (Glycyl lysine isopeptide (Lys-Gly) (interchain with G-Cter in SUMO2)).

Belongs to the requiem/DPF family. In terms of assembly, interacts with the nucleosomes, in particular nucleosomes bearing histone H3 crotonylated at 'Lys-14' (H3K14cr) for which DPF2 has high affinity. Also interacts (via PHD-type zinc finger domains) with histone H3 butyrylated at 'Lys-14' (H3K14bu), histone H3 propionylated at 'Lys-14' (H3K14pr), and histone H3 acetylated at 'Lys-14' (H3K14ac). Interacts with histone H3 acetylated at 'Lys-9' (H3K9ac), histone H3 di-methylated at 'Lys-9' (H3K9me2), and histone H3 tri-methylated at 'Lys-9' (H3K9me3). Interacts with histone H4 acetylated at 'Lys-12' (H4K12ac). Interacts with histone H4 acetylated at 'Lys-16' (H4K16ac). Interacts with SWI/SNF complex components. Interacts with SMARCA2, SMARCA4, SMARCB1 and SMARCD1. Interacts with SMARCC1, SMARCC2 and ACTL6A. Interacts with RUNX1. In terms of tissue distribution, in embryo, highest levels are seen in brain, eyes, thymus and olfactory epithelium in nose, whereas several other tissues, including the musculoskeletal system, show moderate expression. In adult, higher expression in testis, medium in thymus and spleen, lower in certain parts of the brain as the hippocampus. No expression in adult heart, lung, liver, duodenum and kidney.

The protein resides in the nucleus. The protein localises to the cytoplasm. Functionally, plays an active role in transcriptional regulation by binding modified histones H3 and H4. Is a negative regulator of myeloid differentiation of hematopoietic progenitor cells. Might also have a role in the development and maturation of lymphoid cells. Involved in the regulation of non-canonical NF-kappa-B pathway. This Mus musculus (Mouse) protein is Zinc finger protein ubi-d4 (Dpf2).